The following is a 28-amino-acid chain: Potassium channel toxin alpha-KTx 13.2 (28 aa).

Disulfide bonds link Cys2–Cys19, Cys6–Cys24, and Cys10–Cys26. An interaction with Ca(2+)-activated K(+) channels region spans residues 17–24; it reads IKCINGSC.

The protein belongs to the short scorpion toxin superfamily. Potassium channel inhibitor family. Alpha-KTx 13 subfamily. In terms of tissue distribution, expressed by the venom gland.

The protein resides in the secreted. Functionally, potent and selective inhibitor of Kv1.2/KCNA2 potassium channels. This chain is Potassium channel toxin alpha-KTx 13.2, found in Orthochirus scrobiculosus (Central Asian scorpion).